We begin with the raw amino-acid sequence, 349 residues long: Magnesium-protoporphyrin IX monomethyl ester [oxidative] cyclase (349 aa).

The protein belongs to the AcsF family. It depends on Fe cation as a cofactor.

It is found in the plastid. The protein resides in the chloroplast. It carries out the reaction Mg-protoporphyrin IX 13-monomethyl ester + 3 NADPH + 3 O2 + 2 H(+) = 3,8-divinyl protochlorophyllide a + 3 NADP(+) + 5 H2O. Its pathway is porphyrin-containing compound metabolism; chlorophyll biosynthesis (light-independent). Catalyzes the formation of the isocyclic ring in chlorophyll biosynthesis. Mediates the cyclase reaction, which results in the formation of divinylprotochlorophyllide (Pchlide) characteristic of all chlorophylls from magnesium-protoporphyrin IX 13-monomethyl ester (MgPMME). This chain is Magnesium-protoporphyrin IX monomethyl ester [oxidative] cyclase, found in Porphyra purpurea (Red seaweed).